The following is a 32-amino-acid chain: Delta-conotoxin EVIA (32 aa).

3 disulfide bridges follow: C3-C21, C10-C25, and C20-C29. Residue P6 is modified to 4-hydroxyproline. At L32 the chain carries Leucine amide.

It belongs to the conotoxin O1 superfamily. Expressed by the venom duct.

The protein resides in the secreted. In terms of biological role, delta-conotoxins bind to site 6 of voltage-gated sodium channels and inhibit the inactivation process. This toxin inhibits sodium channel inactivation in neuronal membranes from amphibians and mammals (Nav1.2a/SCN1A, Nav1.3/SCN3A and Nav1.6/SCN8A) upon binding to receptor site 6. The sequence is that of Delta-conotoxin EVIA from Conus ermineus (Agate cone).